Reading from the N-terminus, the 415-residue chain is Citrate (Re)-synthase (415 aa).

The Pyruvate carboxyltransferase domain occupies 4–275 (IFIIDVTNRD…GHEVDLSKAW (272 aa)).

It belongs to the alpha-IPM synthase/homocitrate synthase family. It depends on Mn(2+) as a cofactor.

It catalyses the reaction oxaloacetate + acetyl-CoA + H2O = citrate + CoA + H(+). With respect to regulation, inhibited by citrate and under aerobic conditions. Its function is as follows. Catalyzes the condensation of the acetyl group of acetyl coenzyme A (acetyl-CoA) with oxaloacetate to form citrate. This enzyme is highly Re-face stereospecific with respect to the C-2 of oxaloacetate. The sequence is that of Citrate (Re)-synthase from Dehalococcoides mccartyi (strain CBDB1).